The following is a 518-amino-acid chain: MAPKISISLNPPYNGEFYSSNDQMSGIVSLQLTKALSIRKISVILKGFSETLTKIDQEYMFQQNGMMMPGQDNKSFHTLMKFEQRVFPPDNVWNALDGSSKPFKVKPGSYNYSFQFDKFPRKPECLKNHTAKTVAFVTRNNARLPPTFNSHWQEFNKIDNLDLYFYSFGKVIYMVQVQIELGKSSSWFKPFHKLIREIETFEFIPEPKDLIVEPDEDDNEELNAFSNNSRGNSLVTNNEFFNSSNLKVPSKDVKVVNGVGYIKSDRNFSQANSILIENGDIRSRPVSSVTSTRQSTRLVNGMKVFPSTYKMGLPDGESNMRIEVRSRDLKQIYRKDYLFRSGSQNFDKVYVVMEGNIASLSKMQITPLKLQLNLLETTTYLSQGIANGNYSSLKLIEIDLNQLKSNKPLLDLNEIRENFDGSMFECELRLKDHPILRKLVFNEEDYRHRGNRLYSFKTCTIKRIFSLQLLIEWGINGIRKQSEVNIDPVQIFCQVREHVEAEALPRYVPPPTYTEMAS.

K118 participates in a covalent cross-link: Glycyl lysine isopeptide (Lys-Gly) (interchain with G-Cter in ubiquitin).

The protein belongs to the ART10 family. As to quaternary structure, interacts with RSP5. Ubiquitinated by RSP5.

The protein localises to the cytoplasm. Its function is as follows. May regulate endocytosis by recruiting RSP5 ubiquitin ligase activity to specific plasma membrane proteins in response to extracellular stimuli. The polypeptide is Arrestin-related trafficking adapter 10 (ART10) (Saccharomyces cerevisiae (strain RM11-1a) (Baker's yeast)).